We begin with the raw amino-acid sequence, 333 residues long: Holliday junction branch migration complex subunit RuvB (333 aa).

The large ATPase domain (RuvB-L) stretch occupies residues 1–181 (MARILDNDLL…FGINGHMEYY (181 aa)). Residues Leu20, Arg21, Gly62, Lys65, Thr66, Thr67, 128–130 (EDY), Arg171, Tyr181, and Arg218 contribute to the ATP site. Mg(2+) is bound at residue Thr66. The interval 130–148 (YYIDIMIGAGETSRSVHLD) is presensor-1 beta-hairpin. Residues 182 to 252 (ELPDLTEIVE…IADQALTMLD (71 aa)) are small ATPAse domain (RuvB-S). The head domain (RuvB-H) stretch occupies residues 255-333 (HEGLDYVDQK…HMGYDYTRDN (79 aa)). DNA contacts are provided by Arg291, Arg310, Arg312, and Arg315.

Belongs to the RuvB family. As to quaternary structure, homohexamer. Forms an RuvA(8)-RuvB(12)-Holliday junction (HJ) complex. HJ DNA is sandwiched between 2 RuvA tetramers; dsDNA enters through RuvA and exits via RuvB. Only 4 subunits contact one DNA strand at any time. Two adjacent subunits are contacted by domain III of RuvA. An RuvB hexamer assembles on each DNA strand where it exits the tetramer. Each RuvB hexamer is contacted by two RuvA subunits (via domain III) on 2 adjacent RuvB subunits; this complex drives branch migration. In the full resolvosome a probable DNA-RuvA(4)-RuvB(12)-RuvC(2) complex forms which resolves the HJ.

The protein resides in the cytoplasm. It carries out the reaction ATP + H2O = ADP + phosphate + H(+). Its activity is regulated as follows. Binding of domain III of RuvA to a single subunit of the RuvB hexamer activates the ATPase 2 subunits away and nucleotide exchange in the adjacent subunit. The RuvA-RuvB-RuvC complex processes Holliday junction (HJ) DNA during genetic recombination and DNA repair, while the RuvA-RuvB complex plays an important role in the rescue of blocked DNA replication forks via replication fork reversal (RFR). Catalyzes branch migration on Holliday junction (HJ) DNA in complex with RuvA from S.typhimurim and ATP. RuvA specifically binds to HJ cruciform DNA, conferring on it an open structure. The RuvB hexamer acts as an ATP-dependent pump, pulling dsDNA into and through the RuvAB complex. Forms 2 homohexamers on either side of HJ DNA bound by 1 or 2 RuvA tetramers; 4 subunits per hexamer contact DNA at a time. Coordinated motions by a converter formed by DNA-disengaged RuvB subunits stimulates ATP hydrolysis and nucleotide exchange. Immobilization of the converter enables RuvB to convert the ATP-contained energy into a lever motion, pulling 2 nucleotides of DNA out of the RuvA tetramer per ATP hydrolyzed, thus driving DNA branch migration. The RuvB motors rotate together with the DNA substrate, which together with the progressing nucleotide cycle forms the mechanistic basis for DNA recombination by continuous branch migration. Branch migration allows RuvC to scan DNA until it finds its consensus sequence, where it cleaves and resolves cruciform DNA. The polypeptide is Holliday junction branch migration complex subunit RuvB (Streptococcus thermophilus (strain ATCC BAA-250 / LMG 18311)).